Reading from the N-terminus, the 238-residue chain is Large ribosomal subunit protein bL25 (238 aa).

Residues 1–10 (MATTVKELKA) show a composition bias toward basic and acidic residues. The interval 1–24 (MATTVKELKATARPKSGKGAARAE) is disordered.

Belongs to the bacterial ribosomal protein bL25 family. CTC subfamily. In terms of assembly, part of the 50S ribosomal subunit; part of the 5S rRNA/L5/L18/L25 subcomplex. Contacts the 5S rRNA. Binds to the 5S rRNA independently of L5 and L18.

Its function is as follows. This is one of the proteins that binds to the 5S RNA in the ribosome where it forms part of the central protuberance. This chain is Large ribosomal subunit protein bL25, found in Bradyrhizobium diazoefficiens (strain JCM 10833 / BCRC 13528 / IAM 13628 / NBRC 14792 / USDA 110).